Here is a 131-residue protein sequence, read N- to C-terminus: Cytochrome c-552 (131 aa).

Cys-11, Cys-14, His-15, and Met-69 together coordinate heme c.

In terms of processing, binds 1 heme c group covalently per subunit.

This monoheme basic protein appears to function as an electron donor to cytochrome oxidase in T.thermophilus. The polypeptide is Cytochrome c-552 (cycA) (Thermus thermophilus).